The sequence spans 395 residues: MVQSLHEFLEENINYLKENGLYNEIDTIEGANGPEIKINGKSYINLSSNNYLGLATNEDLKSAAKAAIDTHGVGAGAVRTINGTLDLHDELEETLAKFKGTEAAIAYQSGFNCNMAAISAVMNKNDAILSDELNHASIIDGCRLSKAKIIRVNHSDMDDLRAKAKEAVESGQYNKVMYITDGVFSMDGDVAKLPEIVEIAEEFGLLTYVDDAHGSGVMGKGAGTVKHFGLQDKIDFQIGTLSKAIGVVGGYVAGTKELIDWLKAQSRPFLFSTSLAPGDTKAITEAVKKLMDSTELHDKLWNNAQYLKNGLSKLGYDTGESETPITPVIIGDEKTTQEFSKRLKDEGVYVKSIVFPTVPRGTGRVRNMPTAAHTKDMLDEAIAAYEKVGKEMKLI.

110–111 contacts pyridoxal 5'-phosphate; it reads GF. Residue histidine 135 coordinates substrate. Pyridoxal 5'-phosphate is bound by residues serine 185, 210 to 213, and 240 to 243; these read DDAH and TLSK. Lysine 243 is subject to N6-(pyridoxal phosphate)lysine. A substrate-binding site is contributed by threonine 357.

It belongs to the class-II pyridoxal-phosphate-dependent aminotransferase family. As to quaternary structure, homodimer. It depends on pyridoxal 5'-phosphate as a cofactor.

This Staphylococcus aureus (strain COL) protein is Putative pyridoxal phosphate-dependent acyltransferase.